Here is a 493-residue protein sequence, read N- to C-terminus: Galactose-1-phosphate uridylyltransferase (493 aa).

This sequence belongs to the galactose-1-phosphate uridylyltransferase type 2 family.

It is found in the cytoplasm. It catalyses the reaction alpha-D-galactose 1-phosphate + UDP-alpha-D-glucose = alpha-D-glucose 1-phosphate + UDP-alpha-D-galactose. Its pathway is carbohydrate metabolism; galactose metabolism. This is Galactose-1-phosphate uridylyltransferase from Streptococcus salivarius.